The following is a 118-amino-acid chain: MGSKAKKRVLLPTRPAPPTVEQILEDVRGAPAEDPVFTILAPEDPPVPFRMMEDAEAPGEQLYQQSRAYVAANQRLQQAGNVLRQRCELLQRAGEDLEREVAQMKQAALPAAEAASSG.

Tyr63 is modified (phosphotyrosine). A coiled-coil region spans residues 81–109 (NVLRQRCELLQRAGEDLEREVAQMKQAAL).

This sequence belongs to the UPF0449 family.

The protein is UPF0449 protein C19orf25 (C19orf25) of Homo sapiens (Human).